Reading from the N-terminus, the 446-residue chain is Long-chain fatty acid transport protein (446 aa).

An N-terminal signal peptide occupies residues 1-25 (MSQKTLFTKSALAVAVALISTQAWS).

This sequence belongs to the OmpP1/FadL family. As to quaternary structure, has been isolated from outer membrane preparation as a homodimer.

It localises to the cell outer membrane. In terms of biological role, involved in translocation of long-chain fatty acids across the outer membrane. It is a receptor for the bacteriophage T2. FadL may form a specific channel. This chain is Long-chain fatty acid transport protein (fadL), found in Escherichia coli (strain K12).